The following is a 176-amino-acid chain: ATP-dependent protease subunit HslV (176 aa).

T2 is an active-site residue. Positions 157, 160, and 163 each coordinate Na(+).

It belongs to the peptidase T1B family. HslV subfamily. In terms of assembly, a double ring-shaped homohexamer of HslV is capped on each side by a ring-shaped HslU homohexamer. The assembly of the HslU/HslV complex is dependent on binding of ATP.

The protein resides in the cytoplasm. The catalysed reaction is ATP-dependent cleavage of peptide bonds with broad specificity.. Its activity is regulated as follows. Allosterically activated by HslU binding. Protease subunit of a proteasome-like degradation complex believed to be a general protein degrading machinery. This Pseudomonas fluorescens (strain SBW25) protein is ATP-dependent protease subunit HslV.